The primary structure comprises 440 residues: 3-phosphoshikimate 1-carboxyvinyltransferase (440 aa).

Residues Lys-28, Ser-29, and Arg-33 each contribute to the 3-phosphoshikimate site. Lys-28 contributes to the phosphoenolpyruvate binding site. Positions 98 and 126 each coordinate phosphoenolpyruvate. Ser-171, Gln-173, Asp-318, and Lys-345 together coordinate 3-phosphoshikimate. Gln-173 serves as a coordination point for phosphoenolpyruvate. The active-site Proton acceptor is the Asp-318. Phosphoenolpyruvate is bound by residues Arg-349 and Arg-391.

This sequence belongs to the EPSP synthase family. Monomer.

The protein resides in the cytoplasm. The catalysed reaction is 3-phosphoshikimate + phosphoenolpyruvate = 5-O-(1-carboxyvinyl)-3-phosphoshikimate + phosphate. It functions in the pathway metabolic intermediate biosynthesis; chorismate biosynthesis; chorismate from D-erythrose 4-phosphate and phosphoenolpyruvate: step 6/7. Its function is as follows. Catalyzes the transfer of the enolpyruvyl moiety of phosphoenolpyruvate (PEP) to the 5-hydroxyl of shikimate-3-phosphate (S3P) to produce enolpyruvyl shikimate-3-phosphate and inorganic phosphate. The chain is 3-phosphoshikimate 1-carboxyvinyltransferase from Anaeromyxobacter sp. (strain K).